We begin with the raw amino-acid sequence, 25 residues long: uncharacterized protein (25 aa).

This is an uncharacterized protein from Ornithodoros (relapsing fever ticks).